Consider the following 302-residue polypeptide: Recombination-associated protein RdgC (302 aa).

This sequence belongs to the RdgC family.

Its subcellular location is the cytoplasm. The protein resides in the nucleoid. Functionally, may be involved in recombination. The polypeptide is Recombination-associated protein RdgC (Proteus mirabilis (strain HI4320)).